The chain runs to 518 residues: 4-trimethylaminobutyraldehyde dehydrogenase B (518 aa).

NAD(+) is bound by residues lysine 204 and 256 to 260; that span reads GSVPT. Glutamate 278 functions as the Proton acceptor in the catalytic mechanism. Cysteine 312 (nucleophile) is an active-site residue. Position 415 (glutamate 415) interacts with NAD(+).

This sequence belongs to the aldehyde dehydrogenase family. In terms of assembly, homotetramer.

The protein localises to the cytoplasm. It localises to the cytosol. The enzyme catalyses 4-(trimethylamino)butanal + NAD(+) + H2O = 4-(trimethylamino)butanoate + NADH + 2 H(+). The catalysed reaction is an aldehyde + NAD(+) + H2O = a carboxylate + NADH + 2 H(+). It participates in amine and polyamine biosynthesis; carnitine biosynthesis. Its function is as follows. Converts gamma-trimethylaminobutyraldehyde into gamma-butyrobetaine with high efficiency (in vitro). Can catalyze the irreversible oxidation of a broad range of aldehydes to the corresponding acids in an NAD-dependent reaction, but with low efficiency. This chain is 4-trimethylaminobutyraldehyde dehydrogenase B (aldh9a1b), found in Danio rerio (Zebrafish).